Consider the following 595-residue polypeptide: Aspartate--tRNA(Asp/Asn) ligase (595 aa).

Glu-175 provides a ligand contact to L-aspartate. Residues 199 to 202 (QQYK) form an aspartate region. Residues Arg-221 and His-454 each contribute to the L-aspartate site. Residue 221–223 (RDE) coordinates ATP. Residue Glu-488 participates in ATP binding. Arg-495 lines the L-aspartate pocket. 540–543 (GIDR) is an ATP binding site.

It belongs to the class-II aminoacyl-tRNA synthetase family. Type 1 subfamily. In terms of assembly, homodimer.

The protein localises to the cytoplasm. The catalysed reaction is tRNA(Asx) + L-aspartate + ATP = L-aspartyl-tRNA(Asx) + AMP + diphosphate. Aspartyl-tRNA synthetase with relaxed tRNA specificity since it is able to aspartylate not only its cognate tRNA(Asp) but also tRNA(Asn). Reaction proceeds in two steps: L-aspartate is first activated by ATP to form Asp-AMP and then transferred to the acceptor end of tRNA(Asp/Asn). The protein is Aspartate--tRNA(Asp/Asn) ligase of Brucella canis (strain ATCC 23365 / NCTC 10854 / RM-666).